Consider the following 375-residue polypeptide: Succinyl-diaminopimelate desuccinylase (375 aa).

H66 lines the Zn(2+) pocket. Residue D68 is part of the active site. D99 is a Zn(2+) binding site. E133 (proton acceptor) is an active-site residue. Zn(2+)-binding residues include E134, E162, and H348.

It belongs to the peptidase M20A family. DapE subfamily. In terms of assembly, homodimer. Zn(2+) serves as cofactor. Requires Co(2+) as cofactor.

It carries out the reaction N-succinyl-(2S,6S)-2,6-diaminopimelate + H2O = (2S,6S)-2,6-diaminopimelate + succinate. The protein operates within amino-acid biosynthesis; L-lysine biosynthesis via DAP pathway; LL-2,6-diaminopimelate from (S)-tetrahydrodipicolinate (succinylase route): step 3/3. Its function is as follows. Catalyzes the hydrolysis of N-succinyl-L,L-diaminopimelic acid (SDAP), forming succinate and LL-2,6-diaminopimelate (DAP), an intermediate involved in the bacterial biosynthesis of lysine and meso-diaminopimelic acid, an essential component of bacterial cell walls. This Buchnera aphidicola subsp. Acyrthosiphon pisum (strain APS) (Acyrthosiphon pisum symbiotic bacterium) protein is Succinyl-diaminopimelate desuccinylase.